The chain runs to 186 residues: Imidazoleglycerol-phosphate dehydratase (186 aa).

The protein belongs to the imidazoleglycerol-phosphate dehydratase family.

The protein resides in the cytoplasm. It carries out the reaction D-erythro-1-(imidazol-4-yl)glycerol 3-phosphate = 3-(imidazol-4-yl)-2-oxopropyl phosphate + H2O. Its pathway is amino-acid biosynthesis; L-histidine biosynthesis; L-histidine from 5-phospho-alpha-D-ribose 1-diphosphate: step 6/9. The polypeptide is Imidazoleglycerol-phosphate dehydratase (Dictyoglomus turgidum (strain DSM 6724 / Z-1310)).